The sequence spans 266 residues: Undecaprenyl-diphosphatase (266 aa).

A run of 7 helical transmembrane segments spans residues 41 to 61 (NLAF…VILW), 82 to 102 (YVIN…FFKD), 106 to 126 (AIFG…AALL), 140 to 160 (ISMK…LPGL), 180 to 200 (LAQF…LLDG), 213 to 233 (IPTL…CLAC), and 245 to 265 (LIYF…VSQL).

It belongs to the UppP family.

The protein localises to the cell inner membrane. It carries out the reaction di-trans,octa-cis-undecaprenyl diphosphate + H2O = di-trans,octa-cis-undecaprenyl phosphate + phosphate + H(+). In terms of biological role, catalyzes the dephosphorylation of undecaprenyl diphosphate (UPP). Confers resistance to bacitracin. The protein is Undecaprenyl-diphosphatase of Bacteroides fragilis (strain YCH46).